We begin with the raw amino-acid sequence, 58 residues long: uncharacterized protein (58 aa).

A run of 2 helical transmembrane segments spans residues 5 to 25 (IAFE…IIAE) and 32 to 52 (WIVV…FKMI).

The protein localises to the cell membrane. This is an uncharacterized protein from Methanocaldococcus jannaschii (strain ATCC 43067 / DSM 2661 / JAL-1 / JCM 10045 / NBRC 100440) (Methanococcus jannaschii).